The sequence spans 172 residues: Counting factor-associated protein B (172 aa).

The N-terminal stretch at 1 to 21 (MKLLNSLILLVLTCLVSSINT) is a signal peptide. N-linked (GlcNAc...) asparagine glycosylation is found at N37 and N153.

The protein resides in the secreted. This Dictyostelium discoideum (Social amoeba) protein is Counting factor-associated protein B (cfaB).